Here is a 120-residue protein sequence, read N- to C-terminus: Chaperonin GroEL (120 aa).

23–27 (DGTTT) is a binding site for ATP.

Belongs to the chaperonin (HSP60) family. In terms of assembly, forms a cylinder of 14 subunits composed of two heptameric rings stacked back-to-back. Interacts with the co-chaperonin GroES.

The protein resides in the cytoplasm. It carries out the reaction ATP + H2O + a folded polypeptide = ADP + phosphate + an unfolded polypeptide.. Functionally, together with its co-chaperonin GroES, plays an essential role in assisting protein folding. The GroEL-GroES system forms a nano-cage that allows encapsulation of the non-native substrate proteins and provides a physical environment optimized to promote and accelerate protein folding. The chain is Chaperonin GroEL from Mycobacterium scrofulaceum.